Reading from the N-terminus, the 196-residue chain is SAGA-associated factor 11 homolog (196 aa).

The tract at residues 1-22 (MSAANMPTTTGAQGSGNQVPTT) is disordered. Residues 106–127 (CTCPNCDRLVAAARFAPHLEKC) form an SGF11-type zinc finger. The segment at 144-196 (TKEGASSAHLHSAGNAGGTDDEDDVDWSSDKRRKKSNQNSRNNGSKKNNGKTF) is disordered. The residue at position 172 (serine 172) is a Phosphoserine. Residues 180-196 (NQNSRNNGSKKNNGKTF) are compositionally biased toward low complexity.

Belongs to the SGF11 family. As to quaternary structure, component of some SAGA transcription coactivator-HAT complexes, at least composed of Ada2b, not/nonstop, Pcaf/Gcn5, Sgf11 and Spt3. Within the SAGA complex, Sgf11, e(y)2, and not/nonstop form an additional subcomplex of SAGA called the DUB module (deubiquitination module). Interacts directly with not/nonstop. Interacts with the AMEX complex component xmas-2. Interacts with Cbp80; important for promoter recruitment of Sgf11 that is not associated with the DUB module.

It localises to the nucleus. The protein localises to the nucleoplasm. Its subcellular location is the cytoplasm. In terms of biological role, component of the transcription regulatory histone acetylation (HAT) complex SAGA, a multiprotein complex that activates transcription by remodeling chromatin and mediating histone acetylation and deubiquitination. Within the SAGA complex, participates in a subcomplex that specifically deubiquitinates histone H2B. The SAGA complex is recruited to specific gene promoters by activators, where it is required for transcription. Required for nuclear receptor-mediated transactivation. Binds independently on SAGA to promoters in an RNA-dependent manner. Binds to mRNA and is essential for total mRNA export from the nucleus. Required to counteract heterochromatin silencing. Controls the development of neuronal connectivity in visual system by being required for accurate axon targeting in the optic lobe. Required for expression of ecdysone-induced genes such as br/broad. The chain is SAGA-associated factor 11 homolog from Drosophila yakuba (Fruit fly).